Here is a 156-residue protein sequence, read N- to C-terminus: ATP synthase subunit b (156 aa).

Residues 5–27 (ITLIGQMITFAIFVGFTMKFVWP) traverse the membrane as a helical segment.

Belongs to the ATPase B chain family. In terms of assembly, F-type ATPases have 2 components, F(1) - the catalytic core - and F(0) - the membrane proton channel. F(1) has five subunits: alpha(3), beta(3), gamma(1), delta(1), epsilon(1). F(0) has three main subunits: a(1), b(2) and c(10-14). The alpha and beta chains form an alternating ring which encloses part of the gamma chain. F(1) is attached to F(0) by a central stalk formed by the gamma and epsilon chains, while a peripheral stalk is formed by the delta and b chains.

The protein resides in the cell inner membrane. F(1)F(0) ATP synthase produces ATP from ADP in the presence of a proton or sodium gradient. F-type ATPases consist of two structural domains, F(1) containing the extramembraneous catalytic core and F(0) containing the membrane proton channel, linked together by a central stalk and a peripheral stalk. During catalysis, ATP synthesis in the catalytic domain of F(1) is coupled via a rotary mechanism of the central stalk subunits to proton translocation. In terms of biological role, component of the F(0) channel, it forms part of the peripheral stalk, linking F(1) to F(0). The polypeptide is ATP synthase subunit b (Francisella tularensis subsp. tularensis (strain WY96-3418)).